Consider the following 381-residue polypeptide: cAMP-dependent protein kinase type I-alpha regulatory subunit (381 aa).

Methionine 1 carries the post-translational modification N-acetylmethionine. Residue alanine 2 is modified to N-acetylalanine; in cAMP-dependent protein kinase type I-alpha regulatory subunit, N-terminally processed. The dimerization and phosphorylation stretch occupies residues 2–136; the sequence is ASGSMATSEE…ALAKAIEKNV (135 aa). Serine 3 carries the post-translational modification Phosphoserine. The disordered stretch occupies residues 73–96; that stretch reads IRTDSREDEISPPPPNPVVKGRRR. A Phosphothreonine modification is found at threonine 75. Phosphoserine is present on residues serine 77 and serine 83. A Pseudophosphorylation motif motif is present at residues 96-100; sequence RRGAI. Position 101 is a phosphoserine (serine 101). Residues 137–254, glutamate 202, arginine 211, 255–381, glutamate 326, and arginine 335 contribute to the 3',5'-cyclic AMP site; these read LFSH…SKVS and ILES…SLSV. The residue at position 258 (serine 258) is a Phosphoserine.

Belongs to the cAMP-dependent kinase regulatory chain family. In terms of assembly, the inactive holoenzyme is composed of two regulatory chains and two catalytic chains. Activation by cAMP releases the two active catalytic monomers and the regulatory dimer. Interacts with PRKACA and PRKACB. PRKAR1A also interacts with RFC2; the complex may be involved in cell survival. Interacts with AKAP4. Interacts with RARA; the interaction occurs in the presence of cAMP or FSH and regulates RARA transcriptional activity. Interacts with the phosphorylated form of PJA2. Interacts with PRKX; regulates this cAMP-dependent protein kinase. Interacts with CBFA2T3. Interacts with smAKAP; this interaction may target PRKAR1A to the plasma membrane. Interacts with AICDA. Post-translationally, the pseudophosphorylation site binds to the substrate-binding region of the catalytic chain, resulting in the inhibition of its activity.

Its subcellular location is the cell membrane. Its function is as follows. Regulatory subunit of the cAMP-dependent protein kinases involved in cAMP signaling in cells. The chain is cAMP-dependent protein kinase type I-alpha regulatory subunit (Prkar1a) from Mus musculus (Mouse).